Consider the following 325-residue polypeptide: Neisseria adhesin A (325 aa).

An N-terminal signal peptide occupies residues 1 to 23 (MKHFQSKVLTAAILAALSGSAMA). The interval 24–137 (DNPPPSTDEI…NTAAIGENKA (114 aa)) is head domain. Positions 86 to 135 (LKEVLAQHDQSLADLTGTVDENSEALVKTAEVVNDISADVKANTAAIGEN) form a coiled coil. Residues 139–231 (IAKKADQTAL…LASAEKSITE (93 aa)) form a coiled stalk domain region. Positions 232–270 (HGTRLNGLDRTVSDLRKETRQGLAEQAALSGLFQPYNVG) are outer membrane translocation of the passenger domain. The next 4 membrane-spanning stretches (beta stranded) occupy residues 270 to 280 (GRFNVTAAVGG), 284 to 295 (ESAVAIGTGFRF), 302 to 308 (KAGVAVG), and 314 to 325 (SAAYHVGVNYEW). Residues 271-325 (RFNVTAAVGGYKSESAVAIGTGFRFTENFAAKAGVAVGTSSGSSAAYHVGVNYEW) are translocator domain.

It belongs to the autotransporter-2 (AT-2) (TC 1.B.40) family. Homotrimer.

The protein localises to the cell surface. The protein resides in the cell outer membrane. Its function is as follows. An antigenic bacterial cell surface protein that adheres to and induces bacterial uptake by human epithelial cells. The chain is Neisseria adhesin A from Neisseria meningitidis serogroup B.